A 303-amino-acid chain; its full sequence is Endo-1,3;1,4-beta-D-glucanase (303 aa).

An N-terminal signal peptide occupies residues 1–43; it reads MPSSAQVLLCLAAVLAAAAATTAEAHSQCLDNPPDRSIHGRQL. N-linked (GlcNAc...) asparagine glycosylation is found at asparagine 115, asparagine 197, and asparagine 257.

In terms of processing, glycosylated.

It localises to the secreted. Functionally, plays a role in control of plant growth. Mediates specific degradation of cell wall (1,3)(1,4)-beta-D-glucans and is related to auxin-mediated growth and development of cereal coleoptiles. The sequence is that of Endo-1,3;1,4-beta-D-glucanase from Zea mays (Maize).